Here is a 106-residue protein sequence, read N- to C-terminus: Small ribosomal subunit protein uS10 (106 aa).

This sequence belongs to the universal ribosomal protein uS10 family. In terms of assembly, part of the 30S ribosomal subunit.

Functionally, involved in the binding of tRNA to the ribosomes. This is Small ribosomal subunit protein uS10 from Caldicellulosiruptor bescii (strain ATCC BAA-1888 / DSM 6725 / KCTC 15123 / Z-1320) (Anaerocellum thermophilum).